We begin with the raw amino-acid sequence, 258 residues long: Protein CHAPERONE-LIKE PROTEIN OF POR1, chloroplastic (258 aa).

The N-terminal 48 residues, 1–48 (MSSSLLLSGSTVSSSFIAPSKPSLVRNSSKTSLLPFRNVSRSFKTVKC), are a transit peptide targeting the chloroplast. Thr49 carries the post-translational modification N-acetylthreonine. Positions 67–122 (WDPYKRLGVSPYASEEEIWASRNFLLQQYAGHERSEESIEGAFEKLLMSSFIRRKK) are J-like domain required for holdase chaperone activity. 3 helical membrane-spanning segments follow: residues 162 to 182 (FLFAFMGGWSIMNSAEGGPAF), 207 to 227 (LIGIGALVAGWFCGSLIIPMI), and 237 to 257 (TLELLTSLVAYVFLFLSCTFL).

Belongs to the chaperone-like protein of POR1 protein family. Interacts with PORB in chloroplast. Interacts with PORA during plastid import. As to expression, expressed ubiquitously with higher levels in young leaves, flowers, and the root elongation zone.

The protein resides in the mitochondrion membrane. The protein localises to the plastid. It is found in the chloroplast envelope. It localises to the chloroplast thylakoid membrane. Essential protein required during embryogenesis. Exhibits holdase chaperone activity involved in the stabilization of NADPH:protochlorophyllide oxidoreductase (POR) proteins against photooxidative stress during POR proteins import into chloroplasts. Required for chloroplast biogenesis and development. When expressed in yeast, triggers mitochondria-mediated cell death associated with the loss of mitochondrial membrane potential. The chain is Protein CHAPERONE-LIKE PROTEIN OF POR1, chloroplastic from Arabidopsis thaliana (Mouse-ear cress).